We begin with the raw amino-acid sequence, 623 residues long: Aspartate--tRNA(Asp/Asn) ligase (623 aa).

Residue Glu175 participates in L-aspartate binding. Residues 199–202 (QQYK) are aspartate. Arg221 and His483 together coordinate L-aspartate. 221–223 (RDE) provides a ligand contact to ATP. Glu517 lines the ATP pocket. Arg524 lines the L-aspartate pocket. Position 569–572 (569–572 (GVDR)) interacts with ATP.

Belongs to the class-II aminoacyl-tRNA synthetase family. Type 1 subfamily. Homodimer.

The protein localises to the cytoplasm. The catalysed reaction is tRNA(Asx) + L-aspartate + ATP = L-aspartyl-tRNA(Asx) + AMP + diphosphate. Functionally, aspartyl-tRNA synthetase with relaxed tRNA specificity since it is able to aspartylate not only its cognate tRNA(Asp) but also tRNA(Asn). Reaction proceeds in two steps: L-aspartate is first activated by ATP to form Asp-AMP and then transferred to the acceptor end of tRNA(Asp/Asn). The chain is Aspartate--tRNA(Asp/Asn) ligase from Xanthobacter autotrophicus (strain ATCC BAA-1158 / Py2).